The sequence spans 327 residues: UPF0065 protein in gbd 5'region (327 aa).

Residues 1–30 (MQRRHFIARAGIAAATAALGLAAMPAQAQA) constitute a signal peptide (tat-type signal).

This sequence belongs to the UPF0065 (bug) family. Post-translationally, predicted to be exported by the Tat system. The position of the signal peptide cleavage has not been experimentally proven.

It localises to the periplasm. This chain is UPF0065 protein in gbd 5'region, found in Cupriavidus necator (Alcaligenes eutrophus).